We begin with the raw amino-acid sequence, 367 residues long: MSDSPVLPRAHGAAVLTAAMRSVAEDFQVDELPAFDASGEGEHLLLSVRKRGQNTAYVAKRLAQWAGIAEMGIGYAGLKDRHAVTTQRFSVHLPKRIAPDLSALDDDDMQVVEHTWHNRKLQRGALHGNRFVLTLREVVGDQTAIDARLHAIAARGIPNWFGEQRFGRDGGNVAAALAMFGYTRQLDGTLAPAPKRRLRNDQRSLLLSAARSALFNQVLTARVEQGDWDAPLDGEAWMLDGSRSVFGPEPWSEVLAERLARFDIHPSGPLWGAGELRCSADAAAIEQAALSDPQSLALRTGLEAAGLKQERRALRLRPQALAHAWLDAQTLQLTFALPPGCYATAVLWELGDVVDAARVAPQSRSEG.

The active-site Nucleophile is aspartate 80. A TRUD domain is found at 156-316; sequence GIPNWFGEQR…LKQERRALRL (161 aa).

This sequence belongs to the pseudouridine synthase TruD family.

It catalyses the reaction uridine(13) in tRNA = pseudouridine(13) in tRNA. Its function is as follows. Responsible for synthesis of pseudouridine from uracil-13 in transfer RNAs. The chain is tRNA pseudouridine synthase D from Xanthomonas campestris pv. campestris (strain B100).